Consider the following 429-residue polypeptide: CinA-like protein (429 aa).

This sequence belongs to the CinA family.

The sequence is that of CinA-like protein from Chlorobium limicola (strain DSM 245 / NBRC 103803 / 6330).